A 368-amino-acid polypeptide reads, in one-letter code: MRVIFTGGGTGGHIYPIMAIIERLKERGISKNDEILFVGTQKGLESKIVPAAGVNFETIQIQGFNRKHPLKNFETIKLFFQATKSARKILQEFKPDVVLGTGGYVSGAMVYEAAKMHIPTMIHESNSVVGLANKFLGHYVDKICYTFDDAAKEFPEKKKLVKTGNPRSQQVLGLHEDKVNLQKELGLNPQMPTVLVFGGSRGALAINRIMLKSLMELKKKPYQIIWATGTYYFDSVQKKLEGVDYGDNIKILPYIQNMPALLPEMTCVVSRSGATSIAEFTALGVPVILIPSPNVTHNHQMKNALDLQKAGAALVIPEDDLNPNNFVSSIDHILLDEKYANEMSEASKALGVPDASDQVIKVMEEISR.

Residues 10–12 (TGG), N126, S200, I255, and Q300 contribute to the UDP-N-acetyl-alpha-D-glucosamine site.

Belongs to the glycosyltransferase 28 family. MurG subfamily.

It localises to the cell membrane. The enzyme catalyses Mur2Ac(oyl-L-Ala-gamma-D-Glu-L-Lys-D-Ala-D-Ala)-di-trans,octa-cis-undecaprenyl diphosphate + UDP-N-acetyl-alpha-D-glucosamine = beta-D-GlcNAc-(1-&gt;4)-Mur2Ac(oyl-L-Ala-gamma-D-Glu-L-Lys-D-Ala-D-Ala)-di-trans,octa-cis-undecaprenyl diphosphate + UDP + H(+). It participates in cell wall biogenesis; peptidoglycan biosynthesis. Its function is as follows. Cell wall formation. Catalyzes the transfer of a GlcNAc subunit on undecaprenyl-pyrophosphoryl-MurNAc-pentapeptide (lipid intermediate I) to form undecaprenyl-pyrophosphoryl-MurNAc-(pentapeptide)GlcNAc (lipid intermediate II). The chain is UDP-N-acetylglucosamine--N-acetylmuramyl-(pentapeptide) pyrophosphoryl-undecaprenol N-acetylglucosamine transferase from Lactobacillus acidophilus (strain ATCC 700396 / NCK56 / N2 / NCFM).